Consider the following 260-residue polypeptide: CD40 ligand (260 aa).

Residues 1–22 (MIETYSQPSPRSVATGLPASMK) lie on the Cytoplasmic side of the membrane. A helical; Signal-anchor for type II membrane protein membrane pass occupies residues 23-46 (IFMYLLTVFLITQMIGSVLFAVYL). The Extracellular portion of the chain corresponds to 47–260 (HRRLDKVEEE…GFSSFGLLKL (214 aa)). Positions 121-260 (IAAHVVSEAN…GFSSFGLLKL (140 aa)) constitute a THD domain. Cysteines 177 and 217 form a disulfide. Asparagine 239 carries an N-linked (GlcNAc...) asparagine glycan.

The protein belongs to the tumor necrosis factor family. Homotrimer. Interacts with CD28. CD40 ligand, soluble form: Exists as either a monomer or a homotrimer. Forms a ternary complex between CD40 and integrins for CD40-CD40LG signaling. Post-translationally, the soluble form derives from the membrane form by proteolytic processing. In terms of tissue distribution, specifically expressed on activated CD4+ T-lymphocytes.

It is found in the cell membrane. The protein localises to the cell surface. Its subcellular location is the secreted. Cytokine that acts as a ligand to CD40/TNFRSF5. Costimulates T-cell proliferation and cytokine production. Its cross-linking on T-cells generates a costimulatory signal which enhances the production of IL4 and IL10 in conjunction with the TCR/CD3 ligation and CD28 costimulation. Induces the activation of NF-kappa-B. Induces the activation of kinases MAPK8 and PAK2 in T-cells. Mediates B-cell proliferation in the absence of co-stimulus as well as IgE production in the presence of IL4. Involved in immunoglobulin class switching. Its function is as follows. Acts as a ligand for integrins, specifically ITGA5:ITGB1 and ITGAV:ITGB3; both integrins and the CD40 receptor are required for activation of CD40-CD40LG signaling, which have cell-type dependent effects, such as B-cell activation, NF-kappa-B signaling and anti-apoptotic signaling. This is CD40 ligand (Cd40lg) from Mus musculus (Mouse).